We begin with the raw amino-acid sequence, 512 residues long: Cytochrome P450 1A2 (512 aa).

Ser-65 carries O-linked (GlcNAc) serine glycosylation. Phe-222 is a substrate binding site. Heme is bound at residue Cys-454.

The protein belongs to the cytochrome P450 family. In terms of assembly, interacts with PGRMC1; the interaction requires PGRMC1 homodimerization. Requires heme as cofactor.

It is found in the endoplasmic reticulum membrane. Its subcellular location is the microsome membrane. The enzyme catalyses an organic molecule + reduced [NADPH--hemoprotein reductase] + O2 = an alcohol + oxidized [NADPH--hemoprotein reductase] + H2O + H(+). The catalysed reaction is 17beta-estradiol + reduced [NADPH--hemoprotein reductase] + O2 = 2-hydroxy-17beta-estradiol + oxidized [NADPH--hemoprotein reductase] + H2O + H(+). It carries out the reaction 17beta-estradiol + reduced [NADPH--hemoprotein reductase] + O2 = 4-hydroxy-17beta-estradiol + oxidized [NADPH--hemoprotein reductase] + H2O + H(+). It catalyses the reaction estrone + reduced [NADPH--hemoprotein reductase] + O2 = 2-hydroxyestrone + oxidized [NADPH--hemoprotein reductase] + H2O + H(+). The enzyme catalyses estrone + reduced [NADPH--hemoprotein reductase] + O2 = 4-hydroxyestrone + oxidized [NADPH--hemoprotein reductase] + H2O + H(+). The catalysed reaction is cholesterol + reduced [NADPH--hemoprotein reductase] + O2 = 25-hydroxycholesterol + oxidized [NADPH--hemoprotein reductase] + H2O + H(+). It carries out the reaction all-trans-retinol + reduced [NADPH--hemoprotein reductase] + O2 = all-trans-retinal + oxidized [NADPH--hemoprotein reductase] + 2 H2O + H(+). It catalyses the reaction all-trans-retinal + reduced [NADPH--hemoprotein reductase] + O2 = all-trans-retinoate + oxidized [NADPH--hemoprotein reductase] + H2O + 2 H(+). The enzyme catalyses (5Z,8Z,11Z,14Z)-eicosatetraenoate + reduced [NADPH--hemoprotein reductase] + O2 = (14R,15S)-epoxy-(5Z,8Z,11Z)-eicosatrienoate + oxidized [NADPH--hemoprotein reductase] + H2O + H(+). The catalysed reaction is (5Z,8Z,11Z,14Z)-eicosatetraenoate + reduced [NADPH--hemoprotein reductase] + O2 = (14S,15R)-epoxy-(5Z,8Z,11Z)-eicosatrienoate + oxidized [NADPH--hemoprotein reductase] + H2O + H(+). It carries out the reaction (5Z,8Z,11Z,14Z,17Z)-eicosapentaenoate + reduced [NADPH--hemoprotein reductase] + O2 = (17R,18S)-epoxy-(5Z,8Z,11Z,14Z)-eicosatetraenoate + oxidized [NADPH--hemoprotein reductase] + H2O + H(+). It catalyses the reaction (4Z,7Z,10Z,13Z,16Z,19Z)-docosahexaenoate + reduced [NADPH--hemoprotein reductase] + O2 = (19R,20S)-epoxy-(4Z,7Z,10Z,13Z,16Z)-docosapentaenoate + oxidized [NADPH--hemoprotein reductase] + H2O + H(+). The enzyme catalyses (5S)-hydroperoxy-(6E,8Z,11Z,14Z)-eicosatetraenoate = 5-oxo-(6E,8Z,11Z,14Z)-eicosatetraenoate + H2O. The catalysed reaction is (12S)-hydroperoxy-(5Z,8Z,10E,14Z)-eicosatetraenoate = 12-oxo-(5Z,8Z,10E,14Z)-eicosatetraenoate + H2O. It carries out the reaction (15S)-hydroperoxy-(5Z,8Z,11Z,13E)-eicosatetraenoate = 15-oxo-(5Z,8Z,11Z,13E)-eicosatetraenoate + H2O. It catalyses the reaction (13S)-hydroperoxy-(9Z,11E)-octadecadienoate = 13-oxo-(9Z,11E)-octadecadienoate + H2O. The enzyme catalyses (5Z,8Z,11Z,14Z)-eicosatetraenoate + reduced [NADPH--hemoprotein reductase] + O2 = 13-hydroxy-(5Z,8Z,11Z,14Z)-eicosatetraenoate + oxidized [NADPH--hemoprotein reductase] + H2O + H(+). The catalysed reaction is (5Z,8Z,11Z,14Z)-eicosatetraenoate + reduced [NADPH--hemoprotein reductase] + O2 = 19-hydroxy-(5Z,8Z,11Z,14Z)-eicosatetraenoate + oxidized [NADPH--hemoprotein reductase] + H2O + H(+). It carries out the reaction (9Z,12Z)-octadecadienoate + reduced [NADPH--hemoprotein reductase] + O2 = 11-hydroxy-(9Z,12Z)-octadecadienoate + oxidized [NADPH--hemoprotein reductase] + H2O + H(+). It participates in cofactor metabolism; retinol metabolism. Its pathway is steroid metabolism; cholesterol metabolism. It functions in the pathway lipid metabolism; arachidonate metabolism. Functionally, a cytochrome P450 monooxygenase involved in the metabolism of various endogenous substrates, including fatty acids, steroid hormones and vitamins. Mechanistically, uses molecular oxygen inserting one oxygen atom into a substrate, and reducing the second into a water molecule, with two electrons provided by NADPH via cytochrome P450 reductase (NADPH--hemoprotein reductase). Catalyzes the hydroxylation of carbon-hydrogen bonds. Exhibits high catalytic activity for the formation of hydroxyestrogens from estrone (E1) and 17beta-estradiol (E2), namely 2-hydroxy E1 and E2. Metabolizes cholesterol toward 25-hydroxycholesterol, a physiological regulator of cellular cholesterol homeostasis. May act as a major enzyme for all-trans retinoic acid biosynthesis in the liver. Catalyzes two successive oxidative transformation of all-trans retinol to all-trans retinal and then to the active form all-trans retinoic acid. Primarily catalyzes stereoselective epoxidation of the last double bond of polyunsaturated fatty acids (PUFA), displaying a strong preference for the (R,S) stereoisomer. Catalyzes bisallylic hydroxylation and omega-1 hydroxylation of PUFA. May also participate in eicosanoids metabolism by converting hydroperoxide species into oxo metabolites (lipoxygenase-like reaction, NADPH-independent). Plays a role in the oxidative metabolism of xenobiotics. Catalyzes the N-hydroxylation of heterocyclic amines and the O-deethylation of phenacetin. Metabolizes caffeine via N3-demethylation. The chain is Cytochrome P450 1A2 (CYP1A2) from Felis catus (Cat).